We begin with the raw amino-acid sequence, 278 residues long: MTTRLDSRFADLKKQGRAAFVTFLMAGDPDLDTSLKLLQALPKAGADIIEIGMPFTDPMADGPAIQAAGLRALKAGTTLQKTLELVRAFRKADDATPLVLMGYYNPIYIYGVEPFLIDAKAAGVDGLIIVDLPPEEDAELCLPAIKAGLNFIRLATPTTDDKRLPAVLANTSGFVYYVSVTGITGAASADASAVSAAVTRIKRHTPLPVCVGFGIRTPEGARDIARHADGAVVGSALVDVLSRSLDAEGRATAATVPAVADLVASLARGVHGAAQAAE.

Residues Glu50 and Asp61 each act as proton acceptor in the active site.

The protein belongs to the TrpA family. In terms of assembly, tetramer of two alpha and two beta chains.

The enzyme catalyses (1S,2R)-1-C-(indol-3-yl)glycerol 3-phosphate + L-serine = D-glyceraldehyde 3-phosphate + L-tryptophan + H2O. The protein operates within amino-acid biosynthesis; L-tryptophan biosynthesis; L-tryptophan from chorismate: step 5/5. Functionally, the alpha subunit is responsible for the aldol cleavage of indoleglycerol phosphate to indole and glyceraldehyde 3-phosphate. The chain is Tryptophan synthase alpha chain from Rhodopseudomonas palustris (strain BisA53).